The following is a 616-amino-acid chain: General alpha-glucoside permease (616 aa).

Over 1-115 (MKNIISLVSK…AALWSILVST (115 aa)) the chain is Cytoplasmic. Residues 15–27 (SKNEDKNISESSR) show a composition bias toward basic and acidic residues. The tract at residues 15 to 40 (SKNEDKNISESSRDIVNQQEVFNTED) is disordered. The chain crosses the membrane as a helical span at residues 116–136 (TLVMEGYDTALLSALYALPVF). At 137–160 (QRKFGTLNGEGSYEITSQWQIGLN) the chain is on the extracellular side. Residues 161–181 (MCVLCGEMIGLQITTYMVEFM) traverse the membrane as a helical segment. Residues 182-191 (GNRYTMITAL) are Cytoplasmic-facing. The helical transmembrane segment at 192 to 212 (GLLTAYIFILYYCKSLAMIAV) threads the bilayer. Residues 213–214 (GQ) lie on the Extracellular side of the membrane. A helical transmembrane segment spans residues 215-235 (ILSAIPWGCFQSLAVTYASEV). Over 236–242 (CPLALRY) the chain is Cytoplasmic. A helical transmembrane segment spans residues 243–263 (YMTSYSNICWLFGQIFASGIM). At 264 to 278 (KNSQENLGNSDLGYK) the chain is on the extracellular side. A helical transmembrane segment spans residues 279–299 (LPFALQWIWPAPLMIGIFFAP). The Cytoplasmic portion of the chain corresponds to 300–373 (ESPWWLVRKD…VNGRRTRLAC (74 aa)). Residues 374 to 394 (LTWVAQNSSGAVLLGYSTYFF) traverse the membrane as a helical segment. At 395–404 (ERAGMATDKA) the chain is on the extracellular side. The helical transmembrane segment at 405–425 (FTFSLIQYCLGLAGTLCSWVI) threads the bilayer. Residues 426-433 (SGRVGRWT) lie on the Cytoplasmic side of the membrane. Residues 434-454 (ILTYGLAFQMVCLFIIGGMGF) traverse the membrane as a helical segment. Residues 455 to 466 (GSGSSASNGAGG) are Extracellular-facing. A helical transmembrane segment spans residues 467 to 487 (LLLALSFFYNAGIGAVVYCIV). The Cytoplasmic portion of the chain corresponds to 488–504 (AEIPSAELRTKTIVLAR). A helical transmembrane segment spans residues 505 to 525 (ICYNLMAVINAILTPYMLNVS). The Extracellular segment spans residues 526 to 532 (DWNWGAK). The helical transmembrane segment at 533–553 (TGLYWGGFTAVTLAWVIIDLP) threads the bilayer. Residues 554 to 616 (ETTGRTFSEI…QRELNAADKC (63 aa)) are Cytoplasmic-facing. The tract at residues 587-616 (GKTQHDSLADESISQSSSIKQRELNAADKC) is disordered. Residues 606 to 616 (KQRELNAADKC) are compositionally biased toward basic and acidic residues.

The protein belongs to the major facilitator superfamily. Sugar transporter (TC 2.A.1.1) family.

It localises to the cell membrane. Its function is as follows. High-affinity uptake of alpha-glucosides such as maltose, turanose, isomaltose, alpha-methylglucoside, maltotriose, palatinose, trehalose, melezitose and glucose. Acts with the concomitant transport of protons into the cell (symport system). Provides an alternative and minor mechanism for growth on trehalose carbon source by transporting trehalose into the cytoplasm for conversion to glucose by neutral trehalase NTH1. The protein is General alpha-glucoside permease of Saccharomyces cerevisiae (strain CEN.PK113-7D) (Baker's yeast).